The sequence spans 113 residues: AGDAAVGEKIAKAKCTACHDLNKGGPIKVGPPLFGVFGRTTGTFAGYSYSPGYTVMGQKGHTWDDNALKAYLLDPKGYVQAKSGDPKANSKMIFRLEKDDDVANVIAYLHTMK.

Residues Cys-15, Cys-18, His-19, and Met-92 each coordinate heme c.

This sequence belongs to the cytochrome c family. In terms of processing, binds 1 heme c group covalently per subunit.

Cytochrome c2 is found mainly in purple, non-sulfur, photosynthetic bacteria where it functions as the electron donor to the oxidized bacteriochlorophyll in the photophosphorylation pathway. However, it may also have a role in the respiratory chain and is found in some non-photosynthetic bacteria. This is Cytochrome c2 from Pararhodospirillum photometricum (Rhodospirillum photometricum).